A 75-amino-acid polypeptide reads, in one-letter code: U6-lycotoxin-Ls1g (75 aa).

The first 21 residues, 1–21, serve as a signal peptide directing secretion; it reads MKLLLFTALVLVVISLIEVEA. Positions 22 to 25 are excised as a propeptide; sequence ENER.

This sequence belongs to the neurotoxin 19 (CSTX) family. 06 (U6-Lctx) subfamily. In terms of processing, contains 4 disulfide bonds. Expressed by the venom gland.

The protein resides in the secreted. The protein is U6-lycotoxin-Ls1g of Lycosa singoriensis (Wolf spider).